Reading from the N-terminus, the 250-residue chain is 5'-nucleotidase SurE (250 aa).

Positions 8, 9, 40, and 94 each coordinate a divalent metal cation.

Belongs to the SurE nucleotidase family. A divalent metal cation is required as a cofactor.

It localises to the cytoplasm. The enzyme catalyses a ribonucleoside 5'-phosphate + H2O = a ribonucleoside + phosphate. Functionally, nucleotidase that shows phosphatase activity on nucleoside 5'-monophosphates. This chain is 5'-nucleotidase SurE, found in Wolbachia pipientis wMel.